Consider the following 321-residue polypeptide: MNINLDRTSSGFCIGVQGTIYAAEEKLQQEGGLYSFGDIVHNEVEVKRLEALGLVTVDERAFRELRDAHVLIRAHGEPPSTYRIARENNLTVTDTTCPVVSRLQRTTRLLFELGYQIIIYGKQSHPEVIGINGQCNNQAVIIKHADLSDPDELKGLDLAKKSALISQTTMDVPGFYELKALLEARFAQYLSSEKSAWMAIRDIDITAAMTGVLSMPSLLFKDTICRQVSSRNQKLHDFSLANDVVIFVAGKKSSNGQVLYHICKEANPRSYFIEEIEEIEERWLRNSDGRAVATVGVCGATSTPMWHLEKVALHLEKNFAQ.

C13 contacts [4Fe-4S] cluster. Positions 41 and 75 each coordinate (2E)-4-hydroxy-3-methylbut-2-enyl diphosphate. Dimethylallyl diphosphate is bound by residues H41 and H75. 2 residues coordinate isopentenyl diphosphate: H41 and H75. A [4Fe-4S] cluster-binding site is contributed by C97. (2E)-4-hydroxy-3-methylbut-2-enyl diphosphate is bound at residue H125. Position 125 (H125) interacts with dimethylallyl diphosphate. Isopentenyl diphosphate is bound at residue H125. E127 acts as the Proton donor in catalysis. Position 168 (T168) interacts with (2E)-4-hydroxy-3-methylbut-2-enyl diphosphate. C225 contributes to the [4Fe-4S] cluster binding site. S253, S254, N255, and S302 together coordinate (2E)-4-hydroxy-3-methylbut-2-enyl diphosphate. Dimethylallyl diphosphate is bound by residues S253, S254, N255, and S302. Isopentenyl diphosphate contacts are provided by S253, S254, N255, and S302.

This sequence belongs to the IspH family. [4Fe-4S] cluster serves as cofactor.

It catalyses the reaction isopentenyl diphosphate + 2 oxidized [2Fe-2S]-[ferredoxin] + H2O = (2E)-4-hydroxy-3-methylbut-2-enyl diphosphate + 2 reduced [2Fe-2S]-[ferredoxin] + 2 H(+). The enzyme catalyses dimethylallyl diphosphate + 2 oxidized [2Fe-2S]-[ferredoxin] + H2O = (2E)-4-hydroxy-3-methylbut-2-enyl diphosphate + 2 reduced [2Fe-2S]-[ferredoxin] + 2 H(+). Its pathway is isoprenoid biosynthesis; dimethylallyl diphosphate biosynthesis; dimethylallyl diphosphate from (2E)-4-hydroxy-3-methylbutenyl diphosphate: step 1/1. It participates in isoprenoid biosynthesis; isopentenyl diphosphate biosynthesis via DXP pathway; isopentenyl diphosphate from 1-deoxy-D-xylulose 5-phosphate: step 6/6. Catalyzes the conversion of 1-hydroxy-2-methyl-2-(E)-butenyl 4-diphosphate (HMBPP) into a mixture of isopentenyl diphosphate (IPP) and dimethylallyl diphosphate (DMAPP). Acts in the terminal step of the DOXP/MEP pathway for isoprenoid precursor biosynthesis. The polypeptide is 4-hydroxy-3-methylbut-2-enyl diphosphate reductase (Pelodictyon phaeoclathratiforme (strain DSM 5477 / BU-1)).